The sequence spans 235 residues: NAD-dependent protein deacylase (235 aa).

Positions 1-235 constitute a Deacetylase sirtuin-type domain; that stretch reads MDLRLFKNIV…VPRFITQFLE (235 aa). An NAD(+)-binding site is contributed by 14 to 33; sequence GAGISAESGIRTFRDQDGLW. The substrate site is built by Tyr-58 and Arg-61. 95-98 contacts NAD(+); the sequence is QNVD. The active-site Proton acceptor is His-113. Zn(2+)-binding residues include Cys-121, Cys-124, Cys-140, and Cys-143. Residues 180-182, 204-206, and Ala-222 contribute to the NAD(+) site; these read GTS and NLK.

The protein belongs to the sirtuin family. Class III subfamily. It depends on Zn(2+) as a cofactor.

The protein resides in the cytoplasm. It catalyses the reaction N(6)-acetyl-L-lysyl-[protein] + NAD(+) + H2O = 2''-O-acetyl-ADP-D-ribose + nicotinamide + L-lysyl-[protein]. It carries out the reaction N(6)-succinyl-L-lysyl-[protein] + NAD(+) + H2O = 2''-O-succinyl-ADP-D-ribose + nicotinamide + L-lysyl-[protein]. Its function is as follows. NAD-dependent lysine deacetylase and desuccinylase that specifically removes acetyl and succinyl groups on target proteins. Modulates the activities of several proteins which are inactive in their acylated form. This Bdellovibrio bacteriovorus (strain ATCC 15356 / DSM 50701 / NCIMB 9529 / HD100) protein is NAD-dependent protein deacylase.